Reading from the N-terminus, the 239-residue chain is MIENQSDNIDNKEIDVSIQDNAPEDKSSMQNSTTENDELSSQKTEEINTEELKNTISNNDARLEQLEKEHETLKNQYVRISADFDNFRKRQSRDQDDLKIQLVSKTLTAILPIVDNFERARQQLKPESEEAQALHRSYQGLYKQLVEVLKQQGVSPMRVVGQQFDPNLHEAVLREPSEEFEEDFIIEELQRGYHLEGKVLRHALAKVSMGPGKQKSQQEVEKDTVEGDVDSDANTSEDV.

Disordered regions lie at residues 1–60 and 208–239; these read MIEN…SNND and SMGPGKQKSQQEVEKDTVEGDVDSDANTSEDV. Residues 28 to 42 are compositionally biased toward polar residues; the sequence is SMQNSTTENDELSSQ. Composition is skewed to basic and acidic residues over residues 43-53 and 216-225; these read KTEEINTEELK and SQQEVEKDTV. The span at 226–239 shows a compositional bias: acidic residues; that stretch reads EGDVDSDANTSEDV.

This sequence belongs to the GrpE family. Homodimer.

It localises to the cytoplasm. Its function is as follows. Participates actively in the response to hyperosmotic and heat shock by preventing the aggregation of stress-denatured proteins, in association with DnaK and GrpE. It is the nucleotide exchange factor for DnaK and may function as a thermosensor. Unfolded proteins bind initially to DnaJ; upon interaction with the DnaJ-bound protein, DnaK hydrolyzes its bound ATP, resulting in the formation of a stable complex. GrpE releases ADP from DnaK; ATP binding to DnaK triggers the release of the substrate protein, thus completing the reaction cycle. Several rounds of ATP-dependent interactions between DnaJ, DnaK and GrpE are required for fully efficient folding. This chain is Protein GrpE, found in Prochlorococcus marinus (strain MIT 9301).